The chain runs to 484 residues: Diaminopimelate decarboxylase 1, chloroplastic (484 aa).

Residues 1-28 (MAAATQFLSQPSSLNPHQLKNQTSQRSR) are compositionally biased toward polar residues. The disordered stretch occupies residues 1–30 (MAAATQFLSQPSSLNPHQLKNQTSQRSRSI). Residues 1-49 (MAAATQFLSQPSSLNPHQLKNQTSQRSRSIPVLSLKSTLKPLKRLSVKA) constitute a chloroplast transit peptide. Position 50 is an N-acetylalanine (Ala-50). Lys-125 bears the N6-(pyridoxal phosphate)lysine mark. Pyridoxal 5'-phosphate is bound by residues Gly-304 and 340–343 (EPGR). Substrate is bound by residues Arg-343, Arg-379, and Tyr-383. Cys-411 acts as the Proton donor in catalysis. Substrate contacts are provided by Glu-412 and Tyr-440. A pyridoxal 5'-phosphate-binding site is contributed by Tyr-440.

Belongs to the Orn/Lys/Arg decarboxylase class-II family. LysA subfamily. In terms of assembly, homodimer. Requires pyridoxal 5'-phosphate as cofactor.

The protein localises to the plastid. It is found in the chloroplast. The catalysed reaction is meso-2,6-diaminopimelate + H(+) = L-lysine + CO2. It participates in amino-acid biosynthesis; L-lysine biosynthesis via DAP pathway; L-lysine from DL-2,6-diaminopimelate: step 1/1. Specifically catalyzes the decarboxylation of meso-diaminopimelate (meso-DAP) to L-lysine. The protein is Diaminopimelate decarboxylase 1, chloroplastic (LYSA1) of Arabidopsis thaliana (Mouse-ear cress).